The sequence spans 500 residues: Inner membrane transporter YjeM (500 aa).

Residues 1-7 (MPHTIKK) lie on the Cytoplasmic side of the membrane. A helical transmembrane segment spans residues 8 to 28 (MSLIGLILMIFTSVFGFANSP). The Periplasmic portion of the chain corresponds to 29-37 (SAYYLMGYS). A helical membrane pass occupies residues 38–58 (AIPFYIFSALLFFIPFALMMA). At 59 to 82 (EMGAAYRKEEGGIYSWMNNSVGPR) the chain is on the cytoplasmic side. A helical membrane pass occupies residues 83-103 (FAFIGTFMWFSSYIIWMVSTS). The Periplasmic portion of the chain corresponds to 104–132 (AKVWVPFSTFLYGSDMTQHWRIAGLEPTQ). The helical transmembrane segment at 133–153 (VVGLLAVAWMILVTVVASKGI) threads the bilayer. Residues 154–163 (NKIARITAVG) are Cytoplasmic-facing. A helical transmembrane segment spans residues 164 to 184 (GIAVMCLNLVLLLVSITILLL). Residues 185 to 209 (NGGHFAQDINFLASPNPGYQSGLAM) are Periplasmic-facing. Residues 210 to 230 (LSFVVFAIFAYGGIEAVGGLV) form a helical membrane-spanning segment. At 231-243 (DKTENPEKNFAKG) the chain is on the cytoplasmic side. A helical membrane pass occupies residues 244–264 (IVFAAIVISIGYSLAIFLWGV). At 265–319 (STNWQQVLSNGSVNLGNITYVLMKSLGMTLGNALHLSPEASLSLGVWFARITGLS) the chain is on the periplasmic side. A helical membrane pass occupies residues 320–340 (MFLAYTGAFFTLCYSPLKAII). The Cytoplasmic segment spans residues 341–369 (QGTPKALWPEPMTRLNAMGMPSIAMWMQC). The chain crosses the membrane as a helical span at residues 370 to 390 (GLVTVFILLVSFGGGTASAFF). Topologically, residues 391 to 394 (NKLT) are periplasmic. The chain crosses the membrane as a helical span at residues 395 to 415 (LMANVSMTLPYLFLALAFPFF). Residues 416 to 433 (KARQDLDRPFVIFKTHLS) are Cytoplasmic-facing. Residues 434 to 454 (AMIATVVVVLVVTFANVFTII) traverse the membrane as a helical segment. At 455–462 (QPVVEAGD) the chain is on the periplasmic side. The chain crosses the membrane as a helical span at residues 463-483 (WDSTLWMIGGPVFFSLLAMAI). Over 484-500 (YQNYCSRVAKNPQWAVE) the chain is Cytoplasmic.

This sequence belongs to the amino acid-polyamine-organocation (APC) superfamily.

It is found in the cell inner membrane. This is Inner membrane transporter YjeM (yjeM) from Escherichia coli (strain K12).